A 303-amino-acid chain; its full sequence is Dihydroorotate dehydrogenase B (NAD(+)), catalytic subunit (303 aa).

FMN is bound by residues Ser-21 and 45-46 (KG). Substrate-binding positions include Lys-45 and 69–73 (NSIGL). Residues Asn-99 and Asn-127 each coordinate FMN. Residue Asn-127 participates in substrate binding. Cys-130 (nucleophile) is an active-site residue. FMN contacts are provided by Lys-165 and Ile-191. A substrate-binding site is contributed by 192–193 (NT). FMN contacts are provided by residues Gly-217, 243 to 244 (GG), and 265 to 266 (GT).

This sequence belongs to the dihydroorotate dehydrogenase family. Type 1 subfamily. Heterotetramer of 2 PyrK and 2 PyrD type B subunits. The cofactor is FMN.

The protein resides in the cytoplasm. The catalysed reaction is (S)-dihydroorotate + NAD(+) = orotate + NADH + H(+). It functions in the pathway pyrimidine metabolism; UMP biosynthesis via de novo pathway; orotate from (S)-dihydroorotate (NAD(+) route): step 1/1. Functionally, catalyzes the conversion of dihydroorotate to orotate with NAD(+) as electron acceptor. The chain is Dihydroorotate dehydrogenase B (NAD(+)), catalytic subunit (pyrD) from Thermodesulfovibrio yellowstonii (strain ATCC 51303 / DSM 11347 / YP87).